The following is a 220-amino-acid chain: Uracil-DNA glycosylase (220 aa).

The active-site Proton acceptor is Asp-61.

It belongs to the uracil-DNA glycosylase (UDG) superfamily. UNG family.

The protein resides in the cytoplasm. The catalysed reaction is Hydrolyzes single-stranded DNA or mismatched double-stranded DNA and polynucleotides, releasing free uracil.. In terms of biological role, excises uracil residues from the DNA which can arise as a result of misincorporation of dUMP residues by DNA polymerase or due to deamination of cytosine. This Glaesserella parasuis serovar 5 (strain SH0165) (Haemophilus parasuis) protein is Uracil-DNA glycosylase.